A 470-amino-acid chain; its full sequence is UDP-N-acetylmuramate--L-alanine ligase (470 aa).

114–120 contacts ATP; that stretch reads GTHGKTT.

Belongs to the MurCDEF family.

The protein resides in the cytoplasm. It carries out the reaction UDP-N-acetyl-alpha-D-muramate + L-alanine + ATP = UDP-N-acetyl-alpha-D-muramoyl-L-alanine + ADP + phosphate + H(+). Its pathway is cell wall biogenesis; peptidoglycan biosynthesis. Cell wall formation. In Xanthobacter autotrophicus (strain ATCC BAA-1158 / Py2), this protein is UDP-N-acetylmuramate--L-alanine ligase.